The following is a 426-amino-acid chain: CAAX prenyl protease 1 homolog (426 aa).

Residues 1–3 (MVN) lie on the Lumenal side of the membrane. A helical transmembrane segment spans residues 4–24 (YFIISISFFLLEHFYSFYLNF). Residues 25–70 (RQSKLLKNLTKVPEYCKDRITQEDFKKSQEYSKAKLDYKTLTSTIQ) lie on the Cytoplasmic side of the membrane. The helical transmembrane segment at 71–91 (VLTTLLSFYYPVYPYFWNLSL) threads the bilayer. The Lumenal portion of the chain corresponds to 92–106 (ELAEKIGYPNEIIRS). A helical transmembrane segment spans residues 107–127 (CFFFAFTVGVSVITEIPFSYY). Residues 128–150 (YQFILEEKFGYNRMTRTLFIKDK) are Cytoplasmic-facing. A helical transmembrane segment spans residues 151 to 171 (IISTLLMIGFGLPILSLAIFI). Over 172–178 (INWSGPQ) the chain is Lumenal. A helical membrane pass occupies residues 179–199 (LWFYCWLLLVAITLLSITIYP). Residues 200 to 294 (TFIQPLFNKF…GHYKMSHTLK (95 aa)) lie on the Cytoplasmic side of the membrane. Histidine 282 lines the Zn(2+) pocket. Residue glutamate 283 is part of the active site. Histidine 286 contacts Zn(2+). Residues 295 to 315 (QMLLVQVHLVTLLYAFSLLIN) traverse the membrane as a helical segment. The Lumenal segment spans residues 316–333 (DDQLYQQFGFVSSKDSVL). Residues 334–354 (VGLTLFMFLYSPIDRIFSLLI) traverse the membrane as a helical segment. The Cytoplasmic portion of the chain corresponds to 355–426 (NIFSRKYEFQ…KVALYKLKNK (72 aa)). Position 362 (glutamate 362) interacts with Zn(2+).

The protein belongs to the peptidase M48B family. The cofactor is Zn(2+).

The protein resides in the endoplasmic reticulum membrane. It catalyses the reaction Hydrolyzes the peptide bond -P2-(S-farnesyl or geranylgeranyl)C-P1'-P2'-P3'-COOH where P1' and P2' are amino acids with aliphatic side chains and P3' is any C-terminal residue.. Functionally, proteolytically removes the C-terminal three residues of farnesylated proteins. This Dictyostelium discoideum (Social amoeba) protein is CAAX prenyl protease 1 homolog (zmpste24).